Consider the following 137-residue polypeptide: Nucleoside diphosphate kinase (137 aa).

Positions 9, 57, 85, 91, 102, and 112 each coordinate ATP. His-115 functions as the Pros-phosphohistidine intermediate in the catalytic mechanism.

Belongs to the NDK family. Homotetramer. Mg(2+) serves as cofactor.

It is found in the cytoplasm. It carries out the reaction a 2'-deoxyribonucleoside 5'-diphosphate + ATP = a 2'-deoxyribonucleoside 5'-triphosphate + ADP. The catalysed reaction is a ribonucleoside 5'-diphosphate + ATP = a ribonucleoside 5'-triphosphate + ADP. Major role in the synthesis of nucleoside triphosphates other than ATP. The ATP gamma phosphate is transferred to the NDP beta phosphate via a ping-pong mechanism, using a phosphorylated active-site intermediate. This is Nucleoside diphosphate kinase from Helicobacter hepaticus (strain ATCC 51449 / 3B1).